A 762-amino-acid polypeptide reads, in one-letter code: Alpha-xylosidase XylQ (762 aa).

The Nucleophile role is filled by Asp414. Glu417 is a catalytic residue.

The protein belongs to the glycosyl hydrolase 31 family.

The protein localises to the cell membrane. The catalysed reaction is Hydrolysis of terminal, non-reducing alpha-D-xylose residues with release of alpha-D-xylose.. Its function is as follows. Involved in the metabolism of isoprimeverose. Hydrolyzes isoprimeverose into equimolar amounts of glucose and xylose. In vitro, can also use p-nitrophenyl-alpha-D-xylopyranoside (alpha-p-NPX). The protein is Alpha-xylosidase XylQ of Lactiplantibacillus pentosus (Lactobacillus pentosus).